The primary structure comprises 494 residues: 3-octaprenyl-4-hydroxybenzoate carboxy-lyase (494 aa).

Residue Asn172 participates in Mn(2+) binding. Prenylated FMN contacts are provided by residues 175-177, 189-191, and 194-195; these read IYR, RWL, and RG. Glu238 lines the Mn(2+) pocket. Catalysis depends on Asp287, which acts as the Proton donor.

This sequence belongs to the UbiD family. Homohexamer. Requires prenylated FMN as cofactor. The cofactor is Mn(2+).

The protein localises to the cell membrane. The enzyme catalyses a 4-hydroxy-3-(all-trans-polyprenyl)benzoate + H(+) = a 2-(all-trans-polyprenyl)phenol + CO2. It functions in the pathway cofactor biosynthesis; ubiquinone biosynthesis. In terms of biological role, catalyzes the decarboxylation of 3-octaprenyl-4-hydroxy benzoate to 2-octaprenylphenol, an intermediate step in ubiquinone biosynthesis. This is 3-octaprenyl-4-hydroxybenzoate carboxy-lyase from Erwinia tasmaniensis (strain DSM 17950 / CFBP 7177 / CIP 109463 / NCPPB 4357 / Et1/99).